The chain runs to 142 residues: Hemoglobin subunit alpha (142 aa).

The 141-residue stretch at 2–142 (VLSAADKSNV…VGTVLTSKYR (141 aa)) folds into the Globin domain. Phosphoserine is present on Ser-4. An N6-succinyllysine mark is found at Lys-8 and Lys-12. Lys-17 bears the N6-acetyllysine; alternate mark. At Lys-17 the chain carries N6-succinyllysine; alternate. The residue at position 25 (Tyr-25) is a Phosphotyrosine. At Ser-36 the chain carries Phosphoserine. The residue at position 41 (Lys-41) is an N6-succinyllysine. At Ser-50 the chain carries Phosphoserine. Residue His-59 participates in O2 binding. His-88 is a binding site for heme b. Phosphoserine is present on Ser-103. Thr-109 is subject to Phosphothreonine. Ser-125 and Ser-132 each carry phosphoserine. Thr-135 and Thr-138 each carry phosphothreonine. Ser-139 carries the phosphoserine modification.

Belongs to the globin family. Heterotetramer of two alpha chains and two beta chains. In terms of tissue distribution, red blood cells.

In terms of biological role, involved in oxygen transport from the lung to the various peripheral tissues. Functionally, hemopressin acts as an antagonist peptide of the cannabinoid receptor CNR1. Hemopressin-binding efficiently blocks cannabinoid receptor CNR1 and subsequent signaling. The polypeptide is Hemoglobin subunit alpha (HBA) (Pantholops hodgsonii (Chiru)).